The following is a 330-amino-acid chain: Protein-lysine N-methyltransferase EEF2KMT (330 aa).

At M1 the chain carries N-acetylmethionine. S-adenosyl-L-methionine contacts are provided by residues W139, 165-167 (GSG), W228, and A247.

Belongs to the class I-like SAM-binding methyltransferase superfamily. EEF2KMT family. Interacts with FAM86B2 and FAM86C1P.

The protein resides in the cytoplasm. It catalyses the reaction L-lysyl-[protein] + 3 S-adenosyl-L-methionine = N(6),N(6),N(6)-trimethyl-L-lysyl-[protein] + 3 S-adenosyl-L-homocysteine + 3 H(+). Functionally, catalyzes the trimethylation of eukaryotic elongation factor 2 (EEF2) on 'Lys-525'. This chain is Protein-lysine N-methyltransferase EEF2KMT, found in Homo sapiens (Human).